A 359-amino-acid chain; its full sequence is Carbamoyl phosphate synthase arginine-specific small chain (359 aa).

The segment at 1-168 (MKAYLVLATG…VETFEGNGPH (168 aa)) is CPSase. The L-glutamine site is built by Ser45, Gly216, and Gly218. One can recognise a Glutamine amidotransferase type-1 domain in the interval 168 to 355 (HIVLIDYGFK…IDDVAAKGRE (188 aa)). Catalysis depends on Cys243, which acts as the Nucleophile. Leu244, Gln247, Asn285, and Tyr288 together coordinate L-glutamine. Active-site residues include His328 and Glu330.

It belongs to the CarA family. As to quaternary structure, composed of two chains; the small (or glutamine) chain promotes the hydrolysis of glutamine to ammonia, which is used by the large (or ammonia) chain to synthesize carbamoyl phosphate. Tetramer of heterodimers (alpha,beta)4.

The catalysed reaction is hydrogencarbonate + L-glutamine + 2 ATP + H2O = carbamoyl phosphate + L-glutamate + 2 ADP + phosphate + 2 H(+). The enzyme catalyses L-glutamine + H2O = L-glutamate + NH4(+). It functions in the pathway amino-acid biosynthesis; L-arginine biosynthesis; carbamoyl phosphate from bicarbonate: step 1/1. Small subunit of the glutamine-dependent carbamoyl phosphate synthetase (CPSase). CPSase catalyzes the formation of carbamoyl phosphate from the ammonia moiety of glutamine, carbonate, and phosphate donated by ATP, constituting the first step of the biosynthetic pathway leading to arginine and/or urea. The small subunit (glutamine amidotransferase) binds and cleaves glutamine to supply the large subunit with the substrate ammonia. This chain is Carbamoyl phosphate synthase arginine-specific small chain, found in Halalkalibacterium halodurans (strain ATCC BAA-125 / DSM 18197 / FERM 7344 / JCM 9153 / C-125) (Bacillus halodurans).